The chain runs to 443 residues: Probable ribonuclease FAU-1 (443 aa).

The protein belongs to the FAU-1 family.

Functionally, probable RNase involved in rRNA stability through maturation and/or degradation of precursor rRNAs. Binds to RNA in loop regions with AU-rich sequences. This is Probable ribonuclease FAU-1 from Pyrobaculum aerophilum (strain ATCC 51768 / DSM 7523 / JCM 9630 / CIP 104966 / NBRC 100827 / IM2).